Here is a 231-residue protein sequence, read N- to C-terminus: Uracil-DNA glycosylase (231 aa).

The active-site Proton acceptor is Asp-74.

The protein belongs to the uracil-DNA glycosylase (UDG) superfamily. UNG family.

The protein localises to the cytoplasm. The catalysed reaction is Hydrolyzes single-stranded DNA or mismatched double-stranded DNA and polynucleotides, releasing free uracil.. Excises uracil residues from the DNA which can arise as a result of misincorporation of dUMP residues by DNA polymerase or due to deamination of cytosine. In Campylobacter jejuni subsp. jejuni serotype O:6 (strain 81116 / NCTC 11828), this protein is Uracil-DNA glycosylase.